Here is a 308-residue protein sequence, read N- to C-terminus: Ribosomal RNA small subunit methyltransferase A (308 aa).

6 residues coordinate S-adenosyl-L-methionine: N35, V37, G62, E83, D113, and N136.

It belongs to the class I-like SAM-binding methyltransferase superfamily. rRNA adenine N(6)-methyltransferase family. RsmA subfamily.

The protein resides in the cytoplasm. It catalyses the reaction adenosine(1518)/adenosine(1519) in 16S rRNA + 4 S-adenosyl-L-methionine = N(6)-dimethyladenosine(1518)/N(6)-dimethyladenosine(1519) in 16S rRNA + 4 S-adenosyl-L-homocysteine + 4 H(+). In terms of biological role, specifically dimethylates two adjacent adenosines (A1518 and A1519) in the loop of a conserved hairpin near the 3'-end of 16S rRNA in the 30S particle. May play a critical role in biogenesis of 30S subunits. The chain is Ribosomal RNA small subunit methyltransferase A from Bifidobacterium longum (strain NCC 2705).